We begin with the raw amino-acid sequence, 148 residues long: Large ribosomal subunit protein bL9 (148 aa).

This sequence belongs to the bacterial ribosomal protein bL9 family.

In terms of biological role, binds to the 23S rRNA. The protein is Large ribosomal subunit protein bL9 of Acetivibrio thermocellus (strain ATCC 27405 / DSM 1237 / JCM 9322 / NBRC 103400 / NCIMB 10682 / NRRL B-4536 / VPI 7372) (Clostridium thermocellum).